The primary structure comprises 313 residues: Myeloma-overexpressed gene protein (313 aa).

Residues glutamate 107–aspartate 129 are disordered.

This chain is Myeloma-overexpressed gene protein (MYEOV), found in Homo sapiens (Human).